Reading from the N-terminus, the 461-residue chain is ATP synthase subunit beta (461 aa).

151 to 158 (GGAGVGKT) is a binding site for ATP.

The protein belongs to the ATPase alpha/beta chains family. As to quaternary structure, F-type ATPases have 2 components, CF(1) - the catalytic core - and CF(0) - the membrane proton channel. CF(1) has five subunits: alpha(3), beta(3), gamma(1), delta(1), epsilon(1). CF(0) has three main subunits: a(1), b(2) and c(9-12). The alpha and beta chains form an alternating ring which encloses part of the gamma chain. CF(1) is attached to CF(0) by a central stalk formed by the gamma and epsilon chains, while a peripheral stalk is formed by the delta and b chains.

The protein localises to the cell inner membrane. It catalyses the reaction ATP + H2O + 4 H(+)(in) = ADP + phosphate + 5 H(+)(out). Produces ATP from ADP in the presence of a proton gradient across the membrane. The catalytic sites are hosted primarily by the beta subunits. The protein is ATP synthase subunit beta of Coxiella burnetii (strain Dugway 5J108-111).